The primary structure comprises 544 residues: Involucrin (544 aa).

The segment at 1 to 520 (MSQQHTLPVT…GQVQGIQQAL (520 aa)) is disordered. Residues 76–90 (EQQQQPQEQKLQQQH) show a composition bias toward low complexity. Composition is skewed to basic and acidic residues over residues 96–117 (EHQK…REKQ), 124–152 (EEEK…KEQL), 202–234 (QLKH…KQSE), 252–271 (QLKH…HQEG), 283–297 (KHLE…HPEQ), 304–347 (QLEE…HPEQ), 354–411 (QLEE…REEQ), 423–437 (KHLE…HPEQ), and 462–476 (KHLE…HPEQ). Positions 477–494 (QEGQLKPQEQQEGQLKGL) are enriched in low complexity.

This sequence belongs to the involucrin family. In terms of assembly, directly or indirectly cross-linked to cornifelin (CNFN). Post-translationally, substrate of transglutaminase. Specific glutamines or lysines are cross-linked to keratins, desmoplakin and to inter involucrin molecules. Keratinocytes of epidermis and other stratified squamous epithelia.

The protein localises to the cytoplasm. Functionally, part of the insoluble cornified cell envelope (CE) of stratified squamous epithelia. This chain is Involucrin (IVL), found in Aotus trivirgatus (Three-striped night monkey).